An 817-amino-acid chain; its full sequence is Dual specificity tyrosine-phosphorylation-regulated kinase mbk-2 (817 aa).

Disordered stretches follow at residues 1–46, 70–148, 186–206, and 301–396; these read MAAL…HECP, PTSF…GPLG, GSYE…GSQQ, and LPNV…FRPE. Polar residues predominate over residues 7-25; that stretch reads FTRNSRSYGQQPIDVTQQG. Low complexity-rich tracts occupy residues 70-81 and 97-111; these read PTSFSGASSSSS and NLLG…SNSL. Polar residues-rich tracts occupy residues 122–143 and 193–206; these read SGNT…TNNL and GQAQ…GSQQ. Low complexity predominate over residues 303 to 318; the sequence is NVGTSSSNGSSNSSSG. Polar residues predominate over residues 327 to 351; that stretch reads LMTQSIGGPNKHLSASHSTLNTAST. Phosphoserine; by cdk-1 is present on Ser-362. The segment covering 364–392 has biased composition (low complexity); that stretch reads SNESLSRSHTSSSGGSQGGHNSNSGSNSG. The Protein kinase domain maps to 461-774; it reads YEVLKVIGKG…PAQALKHKWL (314 aa). ATP-binding positions include 467–475 and Lys-490; that span reads IGKGSFGQV. Asp-587 acts as the Proton acceptor in catalysis. Tyr-621 is modified (phosphotyrosine; by autocatalysis).

Belongs to the protein kinase superfamily. CMGC Ser/Thr protein kinase family. MNB/DYRK subfamily. Part of a complex, consisting of pseudophosphatases egg-3, egg-4, egg-5 and kinase mbk-2; this complex is required for the oocyte-to-zygote transition. Interacts (via Tyr-619 and Tyr-621) with egg-4 (via tyrosine-protein phosphatase domain) and egg-5 (via tyrosine-protein phosphatase domain); mbk-2 tyrosine phosphorylation enhances the interaction. The interaction inhibits mbk-2 kinase activity and is required for mbk-2 oocyte cortex localization. Interacts (via N-terminus) with egg-3 (via tyrosine-protein phosphatase domain); the interaction does not affect mbk-2 kinase activity, is enhanced by mbk-2 tyrosine phosphorylation status and requires prior binding of mbk-2 to egg-4 and egg-5. The cofactor is Mg(2+). Post-translationally, autophosphorylated. In L1 larvae, expressed widely in the nervous system, including head neurons and the ventral nerve cord. In adult animals, continues to be expressed in the nervous system and is also expressed in body wall muscle.

The protein resides in the cytoplasm. Its subcellular location is the cell cortex. The enzyme catalyses L-seryl-[protein] + ATP = O-phospho-L-seryl-[protein] + ADP + H(+). The catalysed reaction is L-threonyl-[protein] + ATP = O-phospho-L-threonyl-[protein] + ADP + H(+). It carries out the reaction L-tyrosyl-[protein] + ATP = O-phospho-L-tyrosyl-[protein] + ADP + H(+). Its activity is regulated as follows. Activated during oocyte maturation by phosphorylation on Ser-362 by cdk-1. The pseudotyrosine phosphatases egg-4 and egg-5 sequester activated mbk-2 until the meiotic divisions and inhibit mbk-2 kinase activity directly, using a mixed-inhibition mechanism that does not involve tyrosine dephosphorylation. Its function is as follows. Required for oocyte-to-zygote transition in which it phosphorylates oocyte proteins, including mei-1, oma-1, oma-2, mex-5, and mex-6, modifying their activity and/or stability following meiosis. Through phosphorylation of P granule components including meg-1, promotes the disassembly of zygotic P granules in the anterior cytoplasm during zygote polarization, and thus plays a role in P granule distribution and segregation in early stage embryos following meiosis. Functions in both spindle positioning and in the posterior localization of cytoplasmic determinants, including pie-1, pos-1, and pgl-1, in early embryos. Involved in the asymmetric distribution of plk-1 at the 2-cell embryonic stage. This Caenorhabditis elegans protein is Dual specificity tyrosine-phosphorylation-regulated kinase mbk-2.